Consider the following 804-residue polypeptide: Leucine--tRNA ligase (804 aa).

The short motif at 39-50 is the 'HIGH' region element; it reads PFPSGKGLHVGH. The 'KMSKS' region motif lies at 573–577; sequence KMSKS. Residue K576 coordinates ATP.

It belongs to the class-I aminoacyl-tRNA synthetase family.

The protein resides in the cytoplasm. It carries out the reaction tRNA(Leu) + L-leucine + ATP = L-leucyl-tRNA(Leu) + AMP + diphosphate. The protein is Leucine--tRNA ligase of Lactobacillus acidophilus (strain ATCC 700396 / NCK56 / N2 / NCFM).